We begin with the raw amino-acid sequence, 151 residues long: Ribosome maturation factor RimP (151 aa).

Belongs to the RimP family.

It is found in the cytoplasm. In terms of biological role, required for maturation of 30S ribosomal subunits. The polypeptide is Ribosome maturation factor RimP (Saccharophagus degradans (strain 2-40 / ATCC 43961 / DSM 17024)).